Here is a 367-residue protein sequence, read N- to C-terminus: Peptide chain release factor 2 (367 aa).

Position 251 is an N5-methylglutamine (Gln-251).

It belongs to the prokaryotic/mitochondrial release factor family. Post-translationally, methylated by PrmC. Methylation increases the termination efficiency of RF2.

The protein localises to the cytoplasm. In terms of biological role, peptide chain release factor 2 directs the termination of translation in response to the peptide chain termination codons UGA and UAA. The polypeptide is Peptide chain release factor 2 (Nautilia profundicola (strain ATCC BAA-1463 / DSM 18972 / AmH)).